The primary structure comprises 551 residues: Glucans biosynthesis protein D (551 aa).

A signal peptide (tat-type signal) is located at residues 1-32; the sequence is MDRRRFIKGSMAMAAVCGTSGIASLFSQAAFA.

The protein belongs to the OpgD/OpgG family. Predicted to be exported by the Tat system. The position of the signal peptide cleavage has not been experimentally proven.

It is found in the periplasm. The protein operates within glycan metabolism; osmoregulated periplasmic glucan (OPG) biosynthesis. In terms of biological role, probably involved in the control of the structural glucose backbone of osmoregulated periplasmic glucans (OPGs). This Shigella dysenteriae serotype 1 (strain Sd197) protein is Glucans biosynthesis protein D.